Reading from the N-terminus, the 204-residue chain is Facilitator of iron transport 3 (204 aa).

The N-terminal stretch at 1-18 is a signal peptide; that stretch reads MKFSSALVLSAVAATALA. Disordered stretches follow at residues 84-104 and 133-175; these read SAAETSSAAETSSADEGSGSS and EGSS…SSTA. Residues 135–175 are compositionally biased toward low complexity; that stretch reads SSNTWSPSSTSTSSEAATSSASTTATTTAETSSSATSSSTA. Residue Gly182 is the site of GPI-anchor amidated glycine attachment. Residues 183-204 constitute a propeptide, removed in mature form; the sequence is AADAITAGTGLMGAALAAVMLL.

In terms of processing, the GPI-anchor is attached to the protein in the endoplasmic reticulum and serves to target the protein to the cell surface. There, the glucosamine-inositol phospholipid moiety is cleaved off and the GPI-modified mannoprotein is covalently attached via its lipidless GPI glycan remnant to the 1,6-beta-glucan of the outer cell wall layer.

It is found in the secreted. It localises to the cell wall. The protein resides in the membrane. In terms of biological role, involved in the uptake of non-siderophore and siderophore sources of iron. Has a role in the retention of iron in the cell wall and periplasmic space. This chain is Facilitator of iron transport 3 (FIT3), found in Saccharomyces cerevisiae (strain ATCC 204508 / S288c) (Baker's yeast).